Consider the following 111-residue polypeptide: Probable U2 small nuclear ribonucleoprotein B'' (111 aa).

Residues 4 to 83 (NTLYVNNLND…KEMKIQYAHS (80 aa)) form the RRM domain.

In terms of assembly, belongs to the 40S cdc5-associated complex (or cwf complex), a spliceosome sub-complex reminiscent of a late-stage spliceosome composed of the U2, U5 and U6 snRNAs and at least brr2, cdc5, cwf2/prp3, cwf3/syf1, cwf4/syf3, cwf5/ecm2, spp42/cwf6, cwf7/spf27, cwf8, cwf9, cwf10, cwf11, cwf12, prp45/cwf13, cwf14, cwf15, cwf16, cwf17, cwf18, cwf19, cwf20, cwf21, cwf22, cwf23, cwf24, cwf25, cwf26, cyp7/cwf27, cwf28, cwf29/ist3, lea1, msl1, prp5/cwf1, prp10, prp12/sap130, prp17, prp22, sap61, sap62, sap114, sap145, slu7, smb1, smd1, smd3, smf1, smg1 and syf2.

The protein resides in the nucleus. Involved in pre-mRNA splicing. This protein is associated with snRNP U2. It binds stem loop IV of U2 snRNA. This Schizosaccharomyces pombe (strain 972 / ATCC 24843) (Fission yeast) protein is Probable U2 small nuclear ribonucleoprotein B'' (msl1).